Consider the following 920-residue polypeptide: MKEYKDTLNLNATTFSMKGNLSVNEPKTYAKWQEQQAFKRMQARKDNHGDFTLHDGPPYANGHLHLGHALNKILKDIVVKREYFKGKKIYYTPGWDCHGLPIEQQILEQLEKEKTSLENPTLFREKCRDHAKKFLEIQKNEFLQLGVLGDFDDPYKTMDFKFEASIYRALVEVAKKGLLKERHKPIYWSYACESALAEAEVEYKMKKSPSIFVAFGLKKESLEKLKVKKASLVIWTTTPWTLYANVAIALKKDAIYALTQKGYLVAKALHEKLAALGVVDSEIVHEFNANDLEYLKALNPLNQRNSLITLGEHVGLEDGTGAVHTAPGHGEEDYYLGLKYNLEVLMSVDEKGCYDEGIIHNQLLDESYLGEHVFKAQKRIIEQLGDSLLLEQEIEHSYPHCWRTHKPVIYRATTQWFILMDEPFIQNDGSQKTLREVALDAIEKVEFVPNSGKNRLKIMIENRPDWCLSRQRKWGVPLAFFIDKRTNKPCFESEVLEHTAKLFEERGCDVWWEYSVKDLLPPNYQDNATYYEKVMHILDVWFDSGSTFKAVLEDYQGEKGQSPSDVVLEGSDQHRGWFQSSLLIGCILNNQAPFKKVITHGFIVDEKGEKMSKSKGNVVSLDKLLKTHGSDVVRLWVAFNDYQNDLRVSQTFFTQTEQHYKKFRNTLKFLLANFSDMDLKNLERSHNFSPLDHFILESLETISAGVNSAFEEHDFVKGLNVLMAFVTNELSGIYLDACKDSLYCDSKNNEKRQAIQMVLLATASKLCYFLAPILTHTIEEVLAHSQVLRIFLQAKDVFDLKDISVSEKLHLKEFKKPENFEAVLALRSAFNEELDRLKKEGVIKNSLECAIEVGEKALCENLVEELLMVSFVGIAREKLSETPAFTLFKAPFYKCPRCWRFKSELENAPCKRCEQVLKER.

The 'HIGH' region motif lies at 58–68 (PYANGHLHLGH). Position 569 (Glu569) interacts with L-isoleucyl-5'-AMP. The short motif at 610 to 614 (KMSKS) is the 'KMSKS' region element. ATP is bound at residue Lys613. Positions 895, 898, 910, and 913 each coordinate Zn(2+).

The protein belongs to the class-I aminoacyl-tRNA synthetase family. IleS type 1 subfamily. As to quaternary structure, monomer. Zn(2+) is required as a cofactor.

The protein resides in the cytoplasm. It carries out the reaction tRNA(Ile) + L-isoleucine + ATP = L-isoleucyl-tRNA(Ile) + AMP + diphosphate. In terms of biological role, catalyzes the attachment of isoleucine to tRNA(Ile). As IleRS can inadvertently accommodate and process structurally similar amino acids such as valine, to avoid such errors it has two additional distinct tRNA(Ile)-dependent editing activities. One activity is designated as 'pretransfer' editing and involves the hydrolysis of activated Val-AMP. The other activity is designated 'posttransfer' editing and involves deacylation of mischarged Val-tRNA(Ile). This is Isoleucine--tRNA ligase from Helicobacter pylori (strain Shi470).